Reading from the N-terminus, the 239-residue chain is 1-(5-phosphoribosyl)-5-[(5-phosphoribosylamino)methylideneamino] imidazole-4-carboxamide isomerase (239 aa).

The active-site Proton acceptor is Asp8. Residue Asp129 is the Proton donor of the active site.

It belongs to the HisA/HisF family.

The protein resides in the cytoplasm. It catalyses the reaction 1-(5-phospho-beta-D-ribosyl)-5-[(5-phospho-beta-D-ribosylamino)methylideneamino]imidazole-4-carboxamide = 5-[(5-phospho-1-deoxy-D-ribulos-1-ylimino)methylamino]-1-(5-phospho-beta-D-ribosyl)imidazole-4-carboxamide. It participates in amino-acid biosynthesis; L-histidine biosynthesis; L-histidine from 5-phospho-alpha-D-ribose 1-diphosphate: step 4/9. The sequence is that of 1-(5-phosphoribosyl)-5-[(5-phosphoribosylamino)methylideneamino] imidazole-4-carboxamide isomerase from Bacillus cereus (strain Q1).